We begin with the raw amino-acid sequence, 353 residues long: Protein RecA (353 aa).

67 to 74 (GPESSGKT) lines the ATP pocket.

Belongs to the RecA family.

It is found in the cytoplasm. In terms of biological role, can catalyze the hydrolysis of ATP in the presence of single-stranded DNA, the ATP-dependent uptake of single-stranded DNA by duplex DNA, and the ATP-dependent hybridization of homologous single-stranded DNAs. It interacts with LexA causing its activation and leading to its autocatalytic cleavage. This chain is Protein RecA, found in Salmonella paratyphi A (strain ATCC 9150 / SARB42).